We begin with the raw amino-acid sequence, 689 residues long: Protein asunder (689 aa).

Residues Asn521–Thr550 adopt a coiled-coil conformation. Disordered regions lie at residues Ser591–Arg619 and Lys669–Ser689. Residues Ser599–Lys614 show a composition bias toward low complexity. The Nuclear localization signal (NLS) signature appears at Leu613 to Arg619.

The protein belongs to the Integrator subunit 13 family. In terms of assembly, belongs to the multiprotein complex Integrator, at least composed of IntS1, IntS2, IntS3, IntS4, omd/IntS5, IntS6, defl/IntS7, IntS8, IntS9, IntS10, IntS11, IntS12, asun/IntS13, IntS14 and IntS15. The core complex associates with protein phosphatase 2A subunits mts/PP2A and Pp2A-29B, to form the Integrator-PP2A (INTAC) complex. Post-translationally, phosphorylated.

The protein localises to the nucleus. Its subcellular location is the cytoplasm. It is found in the perinuclear region. In terms of biological role, component of the integrator complex, a multiprotein complex that terminates RNA polymerase II (Pol II) transcription in the promoter-proximal region of genes. The integrator complex provides a quality checkpoint during transcription elongation by driving premature transcription termination of transcripts that are unfavorably configured for transcriptional elongation: the complex terminates transcription by (1) catalyzing dephosphorylation of the C-terminal domain (CTD) of Pol II subunit Polr2A/Rbp1 and Spt5, and (2) degrading the exiting nascent RNA transcript via endonuclease activity. The integrator complex is also involved in the 3'-end processing of the U7 snRNA, and also the spliceosomal snRNAs U1, U2, U4 and U5. The protein is Protein asunder (asun) of Drosophila simulans (Fruit fly).